We begin with the raw amino-acid sequence, 298 residues long: MAKKLSSPKEYKEFIDKFDVFLFDCDGVLWSGSKPIPGVTDTMKLLRSLGKQIIFVSNNSTKSRETYMNKINEHGIAAKLEEIYPSAYSSATYVKKVLKLPADKKVFVLGEAGIEDELDRVGVAHIGGTDPSLRRALASEDVEKIGPDPSVGAVLCGMDMHVTYLKYCMAFQYLQDPNCAFLLTNQDSTFPTNGKFLPGSGAISYPLIFSTGRQPKILGKPYDEMMEAIIANVNFDRKKACFVGDRLNTDIQFAKNSNLGGSLLVLTGVSKEEEILEKDAPVVPDYYVESLAKLAETA.

As to quaternary structure, homodimer. In terms of processing, the N-terminus is blocked.

It carries out the reaction 4-nitrophenyl phosphate + H2O = 4-nitrophenol + phosphate + H(+). With respect to regulation, activity enhanced by Mg(2+) ion but inhibited by Zn(2+) ion. The polypeptide is 4-nitrophenylphosphatase (pho2) (Schizosaccharomyces pombe (strain 972 / ATCC 24843) (Fission yeast)).